The primary structure comprises 330 residues: Ribose-phosphate pyrophosphokinase (330 aa).

ATP contacts are provided by residues 40–42 and 99–100; these read DGE and RQ. The Mg(2+) site is built by histidine 133 and aspartate 174. Lysine 197 is a catalytic residue. Residues arginine 199, aspartate 223, and 227–231 each bind D-ribose 5-phosphate; that span reads DTGGT.

The protein belongs to the ribose-phosphate pyrophosphokinase family. Class I subfamily. In terms of assembly, homohexamer. It depends on Mg(2+) as a cofactor.

It localises to the cytoplasm. The enzyme catalyses D-ribose 5-phosphate + ATP = 5-phospho-alpha-D-ribose 1-diphosphate + AMP + H(+). It participates in metabolic intermediate biosynthesis; 5-phospho-alpha-D-ribose 1-diphosphate biosynthesis; 5-phospho-alpha-D-ribose 1-diphosphate from D-ribose 5-phosphate (route I): step 1/1. Involved in the biosynthesis of the central metabolite phospho-alpha-D-ribosyl-1-pyrophosphate (PRPP) via the transfer of pyrophosphoryl group from ATP to 1-hydroxyl of ribose-5-phosphate (Rib-5-P). This is Ribose-phosphate pyrophosphokinase from Ureaplasma parvum serovar 3 (strain ATCC 700970).